We begin with the raw amino-acid sequence, 273 residues long: NADPH-dependent 7-cyano-7-deazaguanine reductase (273 aa).

Substrate is bound at residue 81-83 (VES). NADPH is bound at residue 83–84 (SK). The Thioimide intermediate role is filled by Cys-179. Residue Asp-186 is the Proton donor of the active site. 218–219 (AE) contributes to the substrate binding site. 247–248 (RG) is a binding site for NADPH.

Belongs to the GTP cyclohydrolase I family. QueF type 2 subfamily. As to quaternary structure, homodimer.

The protein resides in the cytoplasm. The catalysed reaction is 7-aminomethyl-7-carbaguanine + 2 NADP(+) = 7-cyano-7-deazaguanine + 2 NADPH + 3 H(+). Its pathway is tRNA modification; tRNA-queuosine biosynthesis. Functionally, catalyzes the NADPH-dependent reduction of 7-cyano-7-deazaguanine (preQ0) to 7-aminomethyl-7-deazaguanine (preQ1). The chain is NADPH-dependent 7-cyano-7-deazaguanine reductase from Rickettsia canadensis (strain McKiel).